The following is a 132-amino-acid chain: Large-conductance mechanosensitive channel (132 aa).

The next 2 membrane-spanning stretches (helical) occupy residues 10 to 30 (FAVK…SAFG) and 76 to 96 (GNFI…FLAI).

This sequence belongs to the MscL family. Homopentamer.

The protein localises to the cell inner membrane. Channel that opens in response to stretch forces in the membrane lipid bilayer. May participate in the regulation of osmotic pressure changes within the cell. The sequence is that of Large-conductance mechanosensitive channel from Campylobacter hominis (strain ATCC BAA-381 / DSM 21671 / CCUG 45161 / LMG 19568 / NCTC 13146 / CH001A).